The primary structure comprises 116 residues: Ribosome-binding factor A (116 aa).

Belongs to the RbfA family. In terms of assembly, monomer. Binds 30S ribosomal subunits, but not 50S ribosomal subunits or 70S ribosomes.

It is found in the cytoplasm. One of several proteins that assist in the late maturation steps of the functional core of the 30S ribosomal subunit. Associates with free 30S ribosomal subunits (but not with 30S subunits that are part of 70S ribosomes or polysomes). Required for efficient processing of 16S rRNA. May interact with the 5'-terminal helix region of 16S rRNA. This is Ribosome-binding factor A from Streptococcus pneumoniae serotype 4 (strain ATCC BAA-334 / TIGR4).